The chain runs to 83 residues: Cytochrome c oxidase subunit 7A2, mitochondrial (83 aa).

The transit peptide at 1 to 23 (MLRNVLALRQIAQRTISTTSRRH) directs the protein to the mitochondrion. Residues 24–48 (FENKVPEKQKLFQEDNGMPVHLKGG) lie on the Mitochondrial matrix side of the membrane. Position 33 is an N6-acetyllysine (K33). A helical membrane pass occupies residues 49 to 77 (TSDALLYRATMLLTVGGTAYAIYMLAMAA). The Mitochondrial intermembrane portion of the chain corresponds to 78–83 (FPKKQN).

Belongs to the cytochrome c oxidase VIIa family. As to quaternary structure, component of the cytochrome c oxidase (complex IV, CIV), a multisubunit enzyme composed of 14 subunits. The complex is composed of a catalytic core of 3 subunits MT-CO1, MT-CO2 and MT-CO3, encoded in the mitochondrial DNA, and 11 supernumerary subunits COX4I, COX5A, COX5B, COX6A, COX6B, COX6C, COX7A, COX7B, COX7C, COX8 and NDUFA4, which are encoded in the nuclear genome. The complex exists as a monomer or a dimer and forms supercomplexes (SCs) in the inner mitochondrial membrane with NADH-ubiquinone oxidoreductase (complex I, CI) and ubiquinol-cytochrome c oxidoreductase (cytochrome b-c1 complex, complex III, CIII), resulting in different assemblies (supercomplex SCI(1)III(2)IV(1) and megacomplex MCI(2)III(2)IV(2)). Interacts with PET100.

It localises to the mitochondrion inner membrane. It functions in the pathway energy metabolism; oxidative phosphorylation. Functionally, component of the cytochrome c oxidase, the last enzyme in the mitochondrial electron transport chain which drives oxidative phosphorylation. The respiratory chain contains 3 multisubunit complexes succinate dehydrogenase (complex II, CII), ubiquinol-cytochrome c oxidoreductase (cytochrome b-c1 complex, complex III, CIII) and cytochrome c oxidase (complex IV, CIV), that cooperate to transfer electrons derived from NADH and succinate to molecular oxygen, creating an electrochemical gradient over the inner membrane that drives transmembrane transport and the ATP synthase. Cytochrome c oxidase is the component of the respiratory chain that catalyzes the reduction of oxygen to water. Electrons originating from reduced cytochrome c in the intermembrane space (IMS) are transferred via the dinuclear copper A center (CU(A)) of subunit 2 and heme A of subunit 1 to the active site in subunit 1, a binuclear center (BNC) formed by heme A3 and copper B (CU(B)). The BNC reduces molecular oxygen to 2 water molecules using 4 electrons from cytochrome c in the IMS and 4 protons from the mitochondrial matrix. The chain is Cytochrome c oxidase subunit 7A2, mitochondrial (Cox7a2) from Rattus norvegicus (Rat).